Here is a 479-residue protein sequence, read N- to C-terminus: Adenylate kinase 8 (479 aa).

2 adenylate kinase regions span residues 58–258 and 269–471; these read PRIV…TYVQ and PRVL…SGII. 67 to 72 lines the ATP pocket; it reads ASGKTT. An NMP 1 region spans residues 87 to 113; the sequence is TLENLILNEFSYTATEARRLYLQRKTV. AMP is bound by residues 140-143, glutamine 147, and arginine 203; that span reads GIPE. The tract at residues 177 to 206 is LID 1; the sequence is GKRIDPQTGEIYHTTFDWPPESEIQNRLMV. 278–283 provides a ligand contact to ATP; it reads GSGKSL. The tract at residues 298–327 is NMP 2; it reads CCGQLLKEAVADRTTFGELIQPFFEKEMAV. Residues 325–327, 354–357, and glutamine 361 contribute to the AMP site; these read MAV and GVPR. The tract at residues 391-424 is LID 2; sequence LRRIDPVTGERYHLMYKPPPTMEIQARLLQNPKD. Arginine 392 lines the ATP pocket.

This sequence belongs to the adenylate kinase family. As to quaternary structure, interacts with CFAP45 and CFAP52; CFAP45 and AK8 dimerization may create a cavity at the interface of the dimer that can accommodate AMP. Expressed in respiratory cells (at protein level).

The protein localises to the cytoplasm. It is found in the cytosol. It localises to the cytoskeleton. Its subcellular location is the cilium axoneme. The enzyme catalyses AMP + ATP = 2 ADP. The catalysed reaction is a 2'-deoxyribonucleoside 5'-diphosphate + ATP = a 2'-deoxyribonucleoside 5'-triphosphate + ADP. It catalyses the reaction a ribonucleoside 5'-diphosphate + ATP = a ribonucleoside 5'-triphosphate + ADP. Nucleoside monophosphate (NMP) kinase that catalyzes the reversible transfer of the terminal phosphate group between nucleoside triphosphates and monophosphates. Has highest activity toward AMP, and weaker activity toward dAMP, CMP and dCMP. Also displays broad nucleoside diphosphate kinase activity. This Homo sapiens (Human) protein is Adenylate kinase 8 (AK8).